Reading from the N-terminus, the 408-residue chain is Serine/threonine transporter SstT (408 aa).

Transmembrane regions (helical) follow at residues 19 to 39 (SLVS…VISP), 48 to 68 (LGSL…LVLV), 86 to 106 (IVGL…LLSF), 143 to 163 (VTAV…GLGF), 193 to 213 (FAPL…GFSA), 223 to 243 (VLLS…VFII), 294 to 314 (IPLG…VLTL), 322 to 342 (IEVS…SACG), and 367 to 387 (VAMQ…SAET).

This sequence belongs to the dicarboxylate/amino acid:cation symporter (DAACS) (TC 2.A.23) family.

It is found in the cell inner membrane. It catalyses the reaction L-serine(in) + Na(+)(in) = L-serine(out) + Na(+)(out). It carries out the reaction L-threonine(in) + Na(+)(in) = L-threonine(out) + Na(+)(out). Its function is as follows. Involved in the import of serine and threonine into the cell, with the concomitant import of sodium (symport system). This Colwellia psychrerythraea (strain 34H / ATCC BAA-681) (Vibrio psychroerythus) protein is Serine/threonine transporter SstT.